Here is a 450-residue protein sequence, read N- to C-terminus: 3-phosphoshikimate 1-carboxyvinyltransferase (450 aa).

Residues Lys-28, Ser-29, and Arg-33 each contribute to the 3-phosphoshikimate site. Lys-28 serves as a coordination point for phosphoenolpyruvate. Positions 100 and 128 each coordinate phosphoenolpyruvate. 3-phosphoshikimate-binding residues include Ser-173, Gln-175, Asp-326, and Lys-353. Gln-175 is a binding site for phosphoenolpyruvate. The Proton acceptor role is filled by Asp-326. Positions 357 and 402 each coordinate phosphoenolpyruvate.

The protein belongs to the EPSP synthase family. Monomer.

The protein localises to the cytoplasm. The enzyme catalyses 3-phosphoshikimate + phosphoenolpyruvate = 5-O-(1-carboxyvinyl)-3-phosphoshikimate + phosphate. It participates in metabolic intermediate biosynthesis; chorismate biosynthesis; chorismate from D-erythrose 4-phosphate and phosphoenolpyruvate: step 6/7. Catalyzes the transfer of the enolpyruvyl moiety of phosphoenolpyruvate (PEP) to the 5-hydroxyl of shikimate-3-phosphate (S3P) to produce enolpyruvyl shikimate-3-phosphate and inorganic phosphate. The polypeptide is 3-phosphoshikimate 1-carboxyvinyltransferase (Brucella melitensis biotype 2 (strain ATCC 23457)).